The chain runs to 261 residues: tRNA pseudouridine synthase A (261 aa).

D52 serves as the catalytic Nucleophile. Y111 contacts substrate.

The protein belongs to the tRNA pseudouridine synthase TruA family. In terms of assembly, homodimer.

The catalysed reaction is uridine(38/39/40) in tRNA = pseudouridine(38/39/40) in tRNA. Functionally, formation of pseudouridine at positions 38, 39 and 40 in the anticodon stem and loop of transfer RNAs. The chain is tRNA pseudouridine synthase A from Jannaschia sp. (strain CCS1).